A 619-amino-acid chain; its full sequence is Phosphomethylpyrimidine synthase (619 aa).

Residues 93-104 are compositionally biased toward basic and acidic residues; it reads IKPEDNGLKGPD. Residues 93–114 are disordered; the sequence is IKPEDNGLKGPDRSGGVTPFPN. Substrate contacts are provided by residues Asn-217, Met-246, Tyr-275, His-311, 331–333, 372–375, and Glu-411; these read SRG and DGLR. His-415 is a Zn(2+) binding site. A substrate-binding site is contributed by Tyr-438. Zn(2+) is bound at residue His-479. Cys-559, Cys-562, and Cys-567 together coordinate [4Fe-4S] cluster.

It belongs to the ThiC family. Homodimer. The cofactor is [4Fe-4S] cluster.

The catalysed reaction is 5-amino-1-(5-phospho-beta-D-ribosyl)imidazole + S-adenosyl-L-methionine = 4-amino-2-methyl-5-(phosphooxymethyl)pyrimidine + CO + 5'-deoxyadenosine + formate + L-methionine + 3 H(+). The protein operates within cofactor biosynthesis; thiamine diphosphate biosynthesis. Functionally, catalyzes the synthesis of the hydroxymethylpyrimidine phosphate (HMP-P) moiety of thiamine from aminoimidazole ribotide (AIR) in a radical S-adenosyl-L-methionine (SAM)-dependent reaction. The sequence is that of Phosphomethylpyrimidine synthase from Rhizorhabdus wittichii (strain DSM 6014 / CCUG 31198 / JCM 15750 / NBRC 105917 / EY 4224 / RW1) (Sphingomonas wittichii).